The chain runs to 105 residues: MPPLIPGELIPEPGTLELNSNRPTLTLRVANSGDRPIQVGSHFHFFETNTALHFDRDAARGHRLDIPAGTAIRFEPGDERDVRLVALAGHRKVFGFNGLVNGPLD.

The protein belongs to the urease beta subunit family. Heterotrimer of UreA (gamma), UreB (beta) and UreC (alpha) subunits. Three heterotrimers associate to form the active enzyme.

Its subcellular location is the cytoplasm. It catalyses the reaction urea + 2 H2O + H(+) = hydrogencarbonate + 2 NH4(+). It participates in nitrogen metabolism; urea degradation; CO(2) and NH(3) from urea (urease route): step 1/1. The chain is Urease subunit beta from Prochlorococcus marinus (strain MIT 9313).